Consider the following 272-residue polypeptide: HMP-PP phosphatase (272 aa).

The Nucleophile role is filled by Asp-8. Mg(2+) contacts are provided by Asp-8, Asp-10, and Asp-212.

The protein belongs to the HAD-like hydrolase superfamily. Cof family. Requires Mg(2+) as cofactor.

It carries out the reaction 4-amino-2-methyl-5-(diphosphooxymethyl)pyrimidine + H2O = 4-amino-2-methyl-5-(phosphooxymethyl)pyrimidine + phosphate + H(+). Catalyzes the hydrolysis of 4-amino-2-methyl-5-hydroxymethylpyrimidine pyrophosphate (HMP-PP) to 4-amino-2-methyl-5-hydroxymethylpyrimidine phosphate (HMP-P). The chain is HMP-PP phosphatase from Salmonella newport (strain SL254).